A 188-amino-acid polypeptide reads, in one-letter code: Transcription antitermination protein NusB (188 aa).

Residues 154–188 (RAANPGAVSGSDAPVAPWDDSEELPAEDEAEDSRP) are disordered. Acidic residues predominate over residues 172 to 188 (DDSEELPAEDEAEDSRP).

This sequence belongs to the NusB family.

In terms of biological role, involved in transcription antitermination. Required for transcription of ribosomal RNA (rRNA) genes. Binds specifically to the boxA antiterminator sequence of the ribosomal RNA (rrn) operons. In Corynebacterium efficiens (strain DSM 44549 / YS-314 / AJ 12310 / JCM 11189 / NBRC 100395), this protein is Transcription antitermination protein NusB.